Here is a 361-residue protein sequence, read N- to C-terminus: NADP-dependent alcohol dehydrogenase 7 (361 aa).

Cys-46 is a binding site for Zn(2+). The NADP(+) site is built by Gly-47 and His-51. Residues His-68, Cys-100, Cys-103, Cys-106, Cys-114, and Cys-164 each contribute to the Zn(2+) site. NADP(+)-binding residues include Ile-189, Gly-191, Ile-192, Ser-211, Arg-212, Lys-216, Cys-251, Ser-253, Ser-256, Ile-276, Ser-300, and Ile-302. Ser-316 carries the phosphoserine modification. Residue Arg-349 participates in NADP(+) binding.

The protein belongs to the zinc-containing alcohol dehydrogenase family. Homodimer. Zn(2+) is required as a cofactor.

The enzyme catalyses a primary alcohol + NADP(+) = an aldehyde + NADPH + H(+). It catalyses the reaction (E)-cinnamyl alcohol + NADP(+) = (E)-cinnamaldehyde + NADPH + H(+). It carries out the reaction 3-methylbutanol + NADP(+) = 3-methylbutanal + NADPH + H(+). Functionally, NADP-dependent alcohol dehydrogenase with a broad substrate specificity. The oxidative reactions are more than 100 times less efficient than the corresponding reductions, suggesting that the enzyme acts as an aldehyde reductase, rather than as an alcohol dehydrogenase. This is NADP-dependent alcohol dehydrogenase 7 (ADH7) from Saccharomyces cerevisiae (strain ATCC 204508 / S288c) (Baker's yeast).